A 637-amino-acid chain; its full sequence is Putative pentatricopeptide repeat-containing protein At5g65820 (637 aa).

PPR repeat units follow at residues 146–180 (SIEVYKSMVKILSKMRQFGAVWGLIEEMRKENPQL), 182–216 (EPELFVVLVQRFASADMVKKAIEVLDEMPKFGFEP), 217–247 (DEYVFGCLLDALCKHGSVKDAAKLFEDMRMR), 251–285 (NLRYFTSLLYGWCRVGKMMEAKYVLVQMNEAGFEP), 286–320 (DIVDYTNLLSGYANAGKMADAYDLLRDMRRRGFEP), 321–355 (NANCYTVLIQALCKVDRMEEAMKVFVEMERYECEA), 356–390 (DVVTYTALVSGFCKWGKIDKCYIVLDDMIKKGLMP), 391–425 (SELTYMHIMVAHEKKESFEECLELMEKMRQIEYHP), 426–460 (DIGIYNVVIRLACKLGEVKEAVRLWNEMEENGLSP), 461–495 (GVDTFVIMINGLASQGCLLEASDHFKEMVTRGLFS), 498–532 (QYGTLKLLLNTVLKDKKLEMAKDVWSCITSKGACE), and 534–568 (NVLSWTIWIHALFSKGYEKEACSYCIEMIEMDFMP). A compositionally biased stretch (basic and acidic residues) spans 616 to 630 (QDLTEKAKSKQDREG). The segment at 616–637 (QDLTEKAKSKQDREGKKKQRSR) is disordered.

The protein belongs to the PPR family. P subfamily.

This Arabidopsis thaliana (Mouse-ear cress) protein is Putative pentatricopeptide repeat-containing protein At5g65820.